The sequence spans 548 residues: Chaperonin GroEL (548 aa).

ATP contacts are provided by residues 30–33 (TLGP), Lys51, 87–91 (DGTTT), Gly415, 479–481 (NAA), and Asp495.

Belongs to the chaperonin (HSP60) family. Forms a cylinder of 14 subunits composed of two heptameric rings stacked back-to-back. Interacts with the co-chaperonin GroES.

It is found in the cytoplasm. It catalyses the reaction ATP + H2O + a folded polypeptide = ADP + phosphate + an unfolded polypeptide.. Its function is as follows. Together with its co-chaperonin GroES, plays an essential role in assisting protein folding. The GroEL-GroES system forms a nano-cage that allows encapsulation of the non-native substrate proteins and provides a physical environment optimized to promote and accelerate protein folding. This Vibrio campbellii (strain ATCC BAA-1116) protein is Chaperonin GroEL.